Here is a 159-residue protein sequence, read N- to C-terminus: Endoribonuclease YbeY (159 aa).

Positions 124, 128, and 134 each coordinate Zn(2+).

This sequence belongs to the endoribonuclease YbeY family. Requires Zn(2+) as cofactor.

It is found in the cytoplasm. Functionally, single strand-specific metallo-endoribonuclease involved in late-stage 70S ribosome quality control and in maturation of the 3' terminus of the 16S rRNA. In Halalkalibacterium halodurans (strain ATCC BAA-125 / DSM 18197 / FERM 7344 / JCM 9153 / C-125) (Bacillus halodurans), this protein is Endoribonuclease YbeY.